A 437-amino-acid polypeptide reads, in one-letter code: GTPase Obg (437 aa).

Residues 2-160 (SMFLDTAKIK…RNLELELKVL (159 aa)) form the Obg domain. Positions 161–338 (ADVGLVGFPS…LLEATAELLE (178 aa)) constitute an OBG-type G domain. Residues 167 to 174 (GFPSVGKS), 192 to 196 (FTTIV), 214 to 217 (DLPG), 284 to 287 (NKMD), and 319 to 321 (SGI) each bind GTP. Ser174 and Thr194 together coordinate Mg(2+). The OCT domain maps to 359–437 (GFNPDEPEFA…IGKFEFEFVD (79 aa)).

The protein belongs to the TRAFAC class OBG-HflX-like GTPase superfamily. OBG GTPase family. Monomer. It depends on Mg(2+) as a cofactor.

The protein localises to the cytoplasm. Functionally, an essential GTPase which binds GTP, GDP and possibly (p)ppGpp with moderate affinity, with high nucleotide exchange rates and a fairly low GTP hydrolysis rate. Plays a role in control of the cell cycle, stress response, ribosome biogenesis and in those bacteria that undergo differentiation, in morphogenesis control. The sequence is that of GTPase Obg from Streptococcus suis (strain 98HAH33).